Reading from the N-terminus, the 117-residue chain is Hainantoxin-XV-3 (117 aa).

The signal sequence occupies residues 1 to 20 (MKLCAVIIASLLVCVAVASS). A disordered region spans residues 20-55 (SSDNQKEFAQEKEMTREETQSLGEHEKDDEVTGSEE). A propeptide spanning residues 21–56 (SDNQKEFAQEKEMTREETQSLGEHEKDDEVTGSEER) is cleaved from the precursor. Positions 23 to 55 (NQKEFAQEKEMTREETQSLGEHEKDDEVTGSEE) are enriched in basic and acidic residues. Cystine bridges form between cysteine 58–cysteine 72, cysteine 65–cysteine 78, cysteine 69–cysteine 115, and cysteine 71–cysteine 91.

It belongs to the neurotoxin 03 (Tx2) family. 02 subfamily. HNTX-XV sub-subfamily. Expressed by the venom gland.

The protein localises to the secreted. Putative ion channel inhibitor. The chain is Hainantoxin-XV-3 from Cyriopagopus hainanus (Chinese bird spider).